The primary structure comprises 411 residues: Eukaryotic initiation factor 4A-III (411 aa).

Methionine 1 carries the N-acetylmethionine modification. Residue alanine 2 is modified to N-acetylalanine; in Eukaryotic initiation factor 4A-III, N-terminally processed. Phosphoserine occurs at positions 10 and 12. Residue lysine 19 forms a Glycyl lysine isopeptide (Lys-Gly) (interchain with G-Cter in SUMO2) linkage. Positions 38-66 (PTFDTMGLREDLLRGIYAYGFEKPSAIQQ) match the Q motif motif. ATP is bound by residues lysine 60, glutamine 65, and 85-90 (GTGKTA). The Helicase ATP-binding domain maps to 69–239 (IKQIIKGRDV…NKFMTDPIRI (171 aa)). An N6-acetyllysine modification is found at lysine 124. A Glycyl lysine isopeptide (Lys-Gly) (interchain with G-Cter in SUMO2) cross-link involves residue lysine 152. Threonine 163 carries the post-translational modification Phosphothreonine. The DEAD box motif lies at 187 to 190 (DEAD). Lysine 198 and lysine 296 each carry N6-acetyllysine. Residues 250 to 411 (GIKQFFVAVE…EMPMNVADLI (162 aa)) form the Helicase C-terminal domain. Residue lysine 314 forms a Glycyl lysine isopeptide (Lys-Gly) (interchain with G-Cter in SUMO2) linkage. Lysine 321 is modified (N6-acetyllysine). ATP is bound by residues aspartate 342 and 367–371 (RSGRY). Residues lysine 374 and lysine 382 each participate in a glycyl lysine isopeptide (Lys-Gly) (interchain with G-Cter in SUMO2) cross-link.

This sequence belongs to the DEAD box helicase family. eIF4A subfamily. As to quaternary structure, identified in the spliceosome C complex. Core component of the mRNA splicing-dependent exon junction complex (EJC); the core complex contains CASC3, EIF4A3, MAGOH or MAGOHB, and RBM8A. Interacts with CASC3, MAGOH, NXF1, RBM8A and ALYREF/THOC4. Component of the ALYREF/THOC4-EJC-RNA complex; in the complex interacts with MAGOH, RBM8A and THOC4 (via the WXHD motif); these interactions are likely specific to RNA-bound EJC. May interact with NOM1. Interacts with POLDIP3. Interacts with CWC22 and PRPF19 in an RNA-independent manner. Direct interaction with CWC22 is mediated by the helicase C-terminal domain. Full interaction with CWC22 occurs only when EIF4A3 is not part of the EJC and prevents EIF4A3 binding to RNA. Identified in a complex composed of the EJC core, UPF3B and UPF2. The EJC core can also interact with UPF3A (in vitro). Interacts with NCBP3. Interacts with NRDE2. Interacts with DHX34; the interaction is RNA-independent.

Its subcellular location is the nucleus. It is found in the nucleus speckle. The protein localises to the cytoplasm. It catalyses the reaction ATP + H2O = ADP + phosphate + H(+). Its activity is regulated as follows. The ATPase activity is increased some 4-fold in the presence of RNA. Functionally, ATP-dependent RNA helicase. Involved in pre-mRNA splicing as component of the spliceosome. Core component of the splicing-dependent multiprotein exon junction complex (EJC) deposited at splice junctions on mRNAs. The EJC is a dynamic structure consisting of core proteins and several peripheral nuclear and cytoplasmic associated factors that join the complex only transiently either during EJC assembly or during subsequent mRNA metabolism. The EJC marks the position of the exon-exon junction in the mature mRNA for the gene expression machinery and the core components remain bound to spliced mRNAs throughout all stages of mRNA metabolism thereby influencing downstream processes including nuclear mRNA export, subcellular mRNA localization, translation efficiency and nonsense-mediated mRNA decay (NMD). Its RNA-dependent ATPase and RNA-helicase activities are induced by CASC3, but abolished in presence of the MAGOH-RBM8A heterodimer, thereby trapping the ATP-bound EJC core onto spliced mRNA in a stable conformation. The inhibition of ATPase activity by the MAGOH-RBM8A heterodimer increases the RNA-binding affinity of the EJC. Involved in translational enhancement of spliced mRNAs after formation of the 80S ribosome complex. Binds spliced mRNA in sequence-independent manner, 20-24 nucleotides upstream of mRNA exon-exon junctions. Shows higher affinity for single-stranded RNA in an ATP-bound core EJC complex than after the ATP is hydrolyzed. Involved in the splicing modulation of BCL2L1/Bcl-X (and probably other apoptotic genes); specifically inhibits formation of proapoptotic isoforms; the function is different from the established EJC assembly. Involved in craniofacial development. This is Eukaryotic initiation factor 4A-III (Eif4a3) from Mus musculus (Mouse).